Consider the following 453-residue polypeptide: tRNA modification GTPase MnmE (453 aa).

3 residues coordinate (6S)-5-formyl-5,6,7,8-tetrahydrofolate: Arg22, Glu79, and Lys119. The TrmE-type G domain maps to 215 to 376 (GMKVVIAGRP…LKQHLKSLMG (162 aa)). Asn225 is a K(+) binding site. GTP-binding positions include 225–230 (NAGKSS), 244–250 (TEIAGTT), 269–272 (DTAG), and 334–337 (NKAD). Ser229 serves as a coordination point for Mg(2+). Residues Thr244, Ile246, and Thr249 each contribute to the K(+) site. Thr250 serves as a coordination point for Mg(2+). Lys453 is a (6S)-5-formyl-5,6,7,8-tetrahydrofolate binding site.

The protein belongs to the TRAFAC class TrmE-Era-EngA-EngB-Septin-like GTPase superfamily. TrmE GTPase family. In terms of assembly, homodimer. Heterotetramer of two MnmE and two MnmG subunits. The cofactor is K(+).

The protein localises to the cytoplasm. Its function is as follows. Exhibits a very high intrinsic GTPase hydrolysis rate. Involved in the addition of a carboxymethylaminomethyl (cmnm) group at the wobble position (U34) of certain tRNAs, forming tRNA-cmnm(5)s(2)U34. The protein is tRNA modification GTPase MnmE of Shewanella pealeana (strain ATCC 700345 / ANG-SQ1).